A 212-amino-acid chain; its full sequence is Nucleoside diphosphate kinase homolog 5 (212 aa).

The tract at residues 13 to 145 is NDK; the sequence is EKTLAIIKPD…EREIRFMFPE (133 aa).

This sequence belongs to the NDK family. Component of the axonemal radial spoke complex 1 (RS1), at least composed of spoke head proteins RSPH1, RSPH3, RSPH9 and the cilia-specific component RSPH4A or sperm-specific component RSPH6A, spoke stalk proteins RSPH14, DNAJB13, DYDC1, ROPN1L and NME5, and the anchor protein IQUB. Interacts with IQUB. In terms of tissue distribution, specifically expressed in testis germinal cells.

It localises to the cell projection. The protein resides in the cilium. The protein localises to the cytoplasm. Its subcellular location is the cytoskeleton. It is found in the flagellum axoneme. Functions as part of axonemal radial spoke complexes that play an important part in the motility of sperm and cilia. Does not seem to have nucleoside diphosphate kinase (NDPK) activity. Confers protection from cell death by BAX and alters the cellular levels of several antioxidant enzymes including GPX5. May play a role in spermiogenesis by increasing the ability of late-stage spermatids to eliminate reactive oxygen species. Exhibits a 3'-5' exonuclease activity with a preference for single-stranded DNA, suggesting roles in DNA proofreading and repair. The protein is Nucleoside diphosphate kinase homolog 5 of Homo sapiens (Human).